The primary structure comprises 156 residues: MDLSNLKPAEGATQAGQRLGRGEGSGRGGHSSTRGTKGQSSRSGSGTRPIWFEGGQTPLFQRVPKHGFNNAPFRTDYAIANVKRLQRLLDEEVLDEDEPVTPEVLADLGVVRTANRVKILGDGDLFDALEVKAHAFSESARQKIKQAGGSVTVVDQ.

The interval 1 to 56 is disordered; that stretch reads MDLSNLKPAEGATQAGQRLGRGEGSGRGGHSSTRGTKGQSSRSGSGTRPIWFEGGQ.

It belongs to the universal ribosomal protein uL15 family. In terms of assembly, part of the 50S ribosomal subunit.

In terms of biological role, binds to the 23S rRNA. The protein is Large ribosomal subunit protein uL15 of Salinibacter ruber (strain DSM 13855 / M31).